Here is a 110-residue protein sequence, read N- to C-terminus: UPF0251 protein PH0803 (110 aa).

The protein belongs to the UPF0251 family.

The sequence is that of UPF0251 protein PH0803 from Pyrococcus horikoshii (strain ATCC 700860 / DSM 12428 / JCM 9974 / NBRC 100139 / OT-3).